Reading from the N-terminus, the 250-residue chain is 3-deoxy-manno-octulosonate cytidylyltransferase (250 aa).

It belongs to the KdsB family.

It is found in the cytoplasm. It catalyses the reaction 3-deoxy-alpha-D-manno-oct-2-ulosonate + CTP = CMP-3-deoxy-beta-D-manno-octulosonate + diphosphate. It participates in nucleotide-sugar biosynthesis; CMP-3-deoxy-D-manno-octulosonate biosynthesis; CMP-3-deoxy-D-manno-octulosonate from 3-deoxy-D-manno-octulosonate and CTP: step 1/1. It functions in the pathway bacterial outer membrane biogenesis; lipopolysaccharide biosynthesis. In terms of biological role, activates KDO (a required 8-carbon sugar) for incorporation into bacterial lipopolysaccharide in Gram-negative bacteria. The chain is 3-deoxy-manno-octulosonate cytidylyltransferase from Francisella tularensis subsp. holarctica (strain FTNF002-00 / FTA).